A 105-amino-acid polypeptide reads, in one-letter code: NADH-quinone oxidoreductase subunit K (105 aa).

A run of 3 helical transmembrane segments spans residues 9 to 29 (PNYYLVLAAVLFTIGAAGVLV), 34 to 54 (IVLFMCVELMLNAANLTLVTF), and 65 to 85 (IIAFFVMVVAAAEVVVGLAII).

Belongs to the complex I subunit 4L family. NDH-1 is composed of 14 different subunits. Subunits NuoA, H, J, K, L, M, N constitute the membrane sector of the complex.

It is found in the cell membrane. The enzyme catalyses a quinone + NADH + 5 H(+)(in) = a quinol + NAD(+) + 4 H(+)(out). In terms of biological role, NDH-1 shuttles electrons from NADH, via FMN and iron-sulfur (Fe-S) centers, to quinones in the respiratory chain. The immediate electron acceptor for the enzyme in this species is believed to be a menaquinone. Couples the redox reaction to proton translocation (for every two electrons transferred, four hydrogen ions are translocated across the cytoplasmic membrane), and thus conserves the redox energy in a proton gradient. This chain is NADH-quinone oxidoreductase subunit K, found in Salinispora arenicola (strain CNS-205).